The following is a 148-amino-acid chain: Large ribosomal subunit protein bL9 (148 aa).

Belongs to the bacterial ribosomal protein bL9 family.

Its function is as follows. Binds to the 23S rRNA. In Parafrankia sp. (strain EAN1pec), this protein is Large ribosomal subunit protein bL9.